The primary structure comprises 120 residues: Large ribosomal subunit protein bL12 (120 aa).

This sequence belongs to the bacterial ribosomal protein bL12 family. As to quaternary structure, homodimer. Part of the ribosomal stalk of the 50S ribosomal subunit. Forms a multimeric L10(L12)X complex, where L10 forms an elongated spine to which 2 to 4 L12 dimers bind in a sequential fashion. Binds GTP-bound translation factors.

Forms part of the ribosomal stalk which helps the ribosome interact with GTP-bound translation factors. Is thus essential for accurate translation. The chain is Large ribosomal subunit protein bL12 from Listeria innocua serovar 6a (strain ATCC BAA-680 / CLIP 11262).